The primary structure comprises 415 residues: Protein-lysine N-trimethyltransferase SMYD5 (415 aa).

Residues 20-351 enclose the SET domain; sequence NCVDVRFINN…PGEEICISYL (332 aa). An MYND-type zinc finger spans residues 95–135; sequence PHPELCKVRPDRHQACPQCQVMYCSSECRQAAMDQYHKILC. S-adenosyl-L-methionine is bound at residue Y350. Residues 388 to 415 form a disordered region; that stretch reads DMTSEDEEEVEGEGETEGEDMEDEMTDV.

Belongs to the class V-like SAM-binding methyltransferase superfamily. As to expression, expressed at high levels in the ovary and at lower levels in the fin, testis and brain.

It localises to the cytoplasm. The enzyme catalyses L-lysyl-[protein] + 3 S-adenosyl-L-methionine = N(6),N(6),N(6)-trimethyl-L-lysyl-[protein] + 3 S-adenosyl-L-homocysteine + 3 H(+). The catalysed reaction is L-lysyl(20)-[histone H4] + 3 S-adenosyl-L-methionine = N(6),N(6),N(6)-trimethyl-L-lysyl(20)-[histone H4] + 3 S-adenosyl-L-homocysteine + 3 H(+). It carries out the reaction L-lysyl(36)-[histone H3] + 3 S-adenosyl-L-methionine = N(6),N(6),N(6)-trimethyl-L-lysyl(36)-[histone H3] + 3 S-adenosyl-L-homocysteine + 3 H(+). In terms of biological role, protein-lysine N-trimethyltransferase that specifically catalyzes trimethylation of 'Lys-22' of the RPL40/eL40 subunit of the 60S ribosome, thereby promoting translation elongation and protein synthesis. May also act as a histone methyltransferase in the context of histone octamers, but not on nucleosome substrates: trimethylates 'Lys-36' of histone H3 and 'Lys-20' of histone H4 to form H3K36me3 and H4K20me3, respectively. The histone methyltransferase activity, which is independent of its SET domain, is however unsure in vivo. Plays a crucial role in hematopoiesis during embryogenesis by negatively regulating expression of genes related to both primitive and definitive hematopoiesis. The protein is Protein-lysine N-trimethyltransferase SMYD5 of Danio rerio (Zebrafish).